We begin with the raw amino-acid sequence, 246 residues long: Carboxy-S-adenosyl-L-methionine synthase (246 aa).

Residues Tyr39, 64–66, 89–90, 117–118, Asn132, and Arg199 each bind S-adenosyl-L-methionine; these read GCS, DN, and DI.

Belongs to the class I-like SAM-binding methyltransferase superfamily. Cx-SAM synthase family. In terms of assembly, homodimer.

It carries out the reaction prephenate + S-adenosyl-L-methionine = carboxy-S-adenosyl-L-methionine + 3-phenylpyruvate + H2O. Functionally, catalyzes the conversion of S-adenosyl-L-methionine (SAM) to carboxy-S-adenosyl-L-methionine (Cx-SAM). This chain is Carboxy-S-adenosyl-L-methionine synthase, found in Enterobacter sp. (strain 638).